A 635-amino-acid polypeptide reads, in one-letter code: Threonine--tRNA ligase (635 aa).

In terms of domain architecture, TGS spans 1 to 62 (MITITLPDGS…EHDAILRIIT (62 aa)). Residues 244–535 (DHRKIGKAQD…LIEHYAGIWP (292 aa)) form a catalytic region. Cys-335, His-386, and His-512 together coordinate Zn(2+).

Belongs to the class-II aminoacyl-tRNA synthetase family. Homodimer. Zn(2+) is required as a cofactor.

Its subcellular location is the cytoplasm. The catalysed reaction is tRNA(Thr) + L-threonine + ATP = L-threonyl-tRNA(Thr) + AMP + diphosphate + H(+). Functionally, catalyzes the attachment of threonine to tRNA(Thr) in a two-step reaction: L-threonine is first activated by ATP to form Thr-AMP and then transferred to the acceptor end of tRNA(Thr). Also edits incorrectly charged L-seryl-tRNA(Thr). The polypeptide is Threonine--tRNA ligase (Xylella fastidiosa (strain M12)).